The sequence spans 629 residues: tRNA uridine 5-carboxymethylaminomethyl modification enzyme MnmG (629 aa).

Residues 13–18 (GGGHAG), Val-125, and Ser-180 contribute to the FAD site. 273 to 287 (GPRYCPSIEDKVMRF) lines the NAD(+) pocket. FAD is bound at residue Gln-370.

This sequence belongs to the MnmG family. As to quaternary structure, homodimer. Heterotetramer of two MnmE and two MnmG subunits. The cofactor is FAD.

Its subcellular location is the cytoplasm. NAD-binding protein involved in the addition of a carboxymethylaminomethyl (cmnm) group at the wobble position (U34) of certain tRNAs, forming tRNA-cmnm(5)s(2)U34. In Aliivibrio fischeri (strain ATCC 700601 / ES114) (Vibrio fischeri), this protein is tRNA uridine 5-carboxymethylaminomethyl modification enzyme MnmG.